We begin with the raw amino-acid sequence, 183 residues long: Isopentenyl-diphosphate Delta-isomerase (183 aa).

Residues His26 and His33 each coordinate Mn(2+). The region spanning 31 to 169 (PLHFAFSCYV…PFAFSPWMVE (139 aa)) is the Nudix hydrolase domain. Residue Cys68 is part of the active site. Cys68 is a Mg(2+) binding site. Residue His70 coordinates Mn(2+). Position 88 (Glu88) interacts with Mg(2+). Residues Glu118 and Glu120 each contribute to the Mn(2+) site. The active site involves Glu120.

The protein belongs to the IPP isomerase type 1 family. Requires Mg(2+) as cofactor. Mn(2+) serves as cofactor.

The protein resides in the cytoplasm. It carries out the reaction isopentenyl diphosphate = dimethylallyl diphosphate. It participates in isoprenoid biosynthesis; dimethylallyl diphosphate biosynthesis; dimethylallyl diphosphate from isopentenyl diphosphate: step 1/1. Catalyzes the 1,3-allylic rearrangement of the homoallylic substrate isopentenyl (IPP) to its highly electrophilic allylic isomer, dimethylallyl diphosphate (DMAPP). In Corynebacterium diphtheriae (strain ATCC 700971 / NCTC 13129 / Biotype gravis), this protein is Isopentenyl-diphosphate Delta-isomerase.